A 514-amino-acid chain; its full sequence is F-box-like/WD repeat-containing protein TBL1XR1 (514 aa).

Ser2 carries the N-acetylserine modification. The LisH domain maps to 4–36 (SSDEVNFLVYRYLQESGFSHSAFTFGIESHISQ). Residues 41-86 (GALVPPAALISIIQKGLQYVEAEVSINEDGTLFDGRPIESLSLIDA) enclose the F-box-like domain. N6-acetyllysine is present on Lys102. Residues 114-139 (AAAATNQQGSAKNGENTANGEENGAH) form a disordered region. A compositionally biased stretch (low complexity) spans 124–135 (AKNGENTANGEE). 8 WD repeats span residues 167–206 (GHES…TSGP), 223–262 (PSNK…ASTL), 264–303 (QHKG…AKQQ), 306–344 (FHSA…PIKT), 347–386 (GHTN…CVHD), 389–437 (AHNK…CIHT), 440–479 (KHQE…LVHS), and 481–513 (RGTG…LDLR). A Glycyl lysine isopeptide (Lys-Gly) (interchain with G-Cter in SUMO2) cross-link involves residue Lys277.

Belongs to the WD repeat EBI family. As to quaternary structure, component of the N-Cor repressor complex, at least composed of NCOR1, NCOR2, HDAC3, TBL1X, TBL1XR1, CORO2A and GPS2. Probable component of some E3 ubiquitin ligase complex. Interacts with histones H2B and H4. Interacts with MECP2; bridges interaction between MECP2 and NCOR1. Interacts with USP44.

It is found in the nucleus. F-box-like protein involved in the recruitment of the ubiquitin/19S proteasome complex to nuclear receptor-regulated transcription units. Plays an essential role in transcription activation mediated by nuclear receptors. Probably acts as integral component of the N-Cor corepressor complex that mediates the recruitment of the 19S proteasome complex, leading to the subsequent proteasomal degradation of N-Cor complex, thereby allowing cofactor exchange, and transcription activation. The sequence is that of F-box-like/WD repeat-containing protein TBL1XR1 (Tbl1xr1) from Mus musculus (Mouse).